The following is a 363-amino-acid chain: Ribosome-binding ATPase YchF (363 aa).

Residues 3 to 256 (FKCGIVGLPN…LDDEEKVEFL (254 aa)) form the OBG-type G domain. 12–17 (NVGKST) contributes to the ATP binding site. 2 residues coordinate Mg(2+): S16 and T36. One can recognise a TGS domain in the interval 278 to 361 (NLQTYFTAGV…QDGDVMHFRF (84 aa)).

It depends on Mg(2+) as a cofactor.

Its function is as follows. ATPase that binds to both the 70S ribosome and the 50S ribosomal subunit in a nucleotide-independent manner. Does not hydrolyze GTP. The chain is Ribosome-binding ATPase YchF from Haemophilus influenzae (strain ATCC 51907 / DSM 11121 / KW20 / Rd).